Here is a 324-residue protein sequence, read N- to C-terminus: Glyoxylate/hydroxypyruvate reductase B (324 aa).

Catalysis depends on residues R237 and E266. H285 functions as the Proton donor in the catalytic mechanism.

Belongs to the D-isomer specific 2-hydroxyacid dehydrogenase family. GhrB subfamily. In terms of assembly, homodimer.

It is found in the cytoplasm. The catalysed reaction is glycolate + NADP(+) = glyoxylate + NADPH + H(+). It carries out the reaction (R)-glycerate + NAD(+) = 3-hydroxypyruvate + NADH + H(+). It catalyses the reaction (R)-glycerate + NADP(+) = 3-hydroxypyruvate + NADPH + H(+). Functionally, catalyzes the NADPH-dependent reduction of glyoxylate and hydroxypyruvate into glycolate and glycerate, respectively. The sequence is that of Glyoxylate/hydroxypyruvate reductase B from Escherichia coli (strain ATCC 8739 / DSM 1576 / NBRC 3972 / NCIMB 8545 / WDCM 00012 / Crooks).